Here is a 360-residue protein sequence, read N- to C-terminus: Decorin (360 aa).

The signal sequence occupies residues Met1 to Ala16. Positions Gly17 to Glu30 are excised as a propeptide. Residue Ser34 is glycosylated (O-linked (Xyl...) (glycosaminoglycan) serine). Disulfide bonds link Cys55-Cys61 and Cys59-Cys68. LRR repeat units lie at residues Glu74–Ile94, Thr95–Ile118, Ser119–Leu142, Lys143–Ile163, Thr164–Leu187, Lys188–Ile213, Thr214–Ile234, Thr235–Ile258, Ser259–Leu282, Val283–Ile305, Ser306–Val335, and Gln336–Lys360. A glycan (N-linked (GlcNAc...) asparagine) is linked at Asn212. N-linked (GlcNAc...) asparagine glycosylation is found at Asn263 and Asn304. Cysteines 314 and 347 form a disulfide.

It belongs to the small leucine-rich proteoglycan (SLRP) family. SLRP class I subfamily. In terms of assembly, binds to type I and type II collagen, fibronectin and TGF-beta. Forms a ternary complex with MFAP2 and ELN. Interacts with DPT. The attached glycosaminoglycan chain can be either chondroitin 4-sulfate, chondroitin 6-sulfate or dermatan sulfate, depending upon the tissue of origin.

The protein resides in the secreted. The protein localises to the extracellular space. It localises to the extracellular matrix. Its function is as follows. May affect the rate of fibrils formation. In Bos taurus (Bovine), this protein is Decorin (DCN).